Here is a 93-residue protein sequence, read N- to C-terminus: Co-chaperonin GroES (93 aa).

Belongs to the GroES chaperonin family. Heptamer of 7 subunits arranged in a ring. Interacts with the chaperonin GroEL.

It is found in the cytoplasm. Functionally, together with the chaperonin GroEL, plays an essential role in assisting protein folding. The GroEL-GroES system forms a nano-cage that allows encapsulation of the non-native substrate proteins and provides a physical environment optimized to promote and accelerate protein folding. GroES binds to the apical surface of the GroEL ring, thereby capping the opening of the GroEL channel. The sequence is that of Co-chaperonin GroES from Streptococcus sanguinis.